The chain runs to 143 residues: Small ribosomal subunit protein bS6 (143 aa).

The tract at residues S100–N143 is disordered. Composition is skewed to basic and acidic residues over residues K104 to V113 and D122 to N143.

It belongs to the bacterial ribosomal protein bS6 family.

Its function is as follows. Binds together with bS18 to 16S ribosomal RNA. This is Small ribosomal subunit protein bS6 from Hamiltonella defensa subsp. Acyrthosiphon pisum (strain 5AT).